Here is an 80-residue protein sequence, read N- to C-terminus: HssA/B-like protein 2 (80 aa).

Positions 1-29 (MSLLSALTSISKPMNTSSKSSVSSKNVSG) are disordered. The span at 9-29 (SISKPMNTSSKSSVSSKNVSG) shows a compositional bias: low complexity.

This sequence belongs to the hssA/B family.

The chain is HssA/B-like protein 2 (hssl2) from Dictyostelium discoideum (Social amoeba).